Reading from the N-terminus, the 455-residue chain is Ribulose bisphosphate carboxylase large chain (455 aa).

The residue at position 5 (K5) is an N6,N6,N6-trimethyllysine. N114 and T164 together coordinate substrate. K166 acts as the Proton acceptor in catalysis. Position 168 (K168) interacts with substrate. Residues K192, D194, and E195 each coordinate Mg(2+). K192 carries the post-translational modification N6-carboxylysine. The active-site Proton acceptor is the H285. Residues R286, H318, and S370 each contribute to the substrate site.

This sequence belongs to the RuBisCO large chain family. Type I subfamily. Heterohexadecamer of 8 large chains and 8 small chains; disulfide-linked. The disulfide link is formed within the large subunit homodimers. Mg(2+) is required as a cofactor. In terms of processing, the disulfide bond which can form in the large chain dimeric partners within the hexadecamer appears to be associated with oxidative stress and protein turnover.

The protein resides in the plastid. It is found in the chloroplast. The enzyme catalyses 2 (2R)-3-phosphoglycerate + 2 H(+) = D-ribulose 1,5-bisphosphate + CO2 + H2O. It catalyses the reaction D-ribulose 1,5-bisphosphate + O2 = 2-phosphoglycolate + (2R)-3-phosphoglycerate + 2 H(+). Functionally, ruBisCO catalyzes two reactions: the carboxylation of D-ribulose 1,5-bisphosphate, the primary event in carbon dioxide fixation, as well as the oxidative fragmentation of the pentose substrate in the photorespiration process. Both reactions occur simultaneously and in competition at the same active site. The polypeptide is Ribulose bisphosphate carboxylase large chain (Senna didymobotrya (Popcorn cassia)).